Consider the following 547-residue polypeptide: Chaperonin GroEL (547 aa).

Residues 30–33 (TLGP), lysine 51, 87–91 (DGTTT), glycine 415, 479–481 (NAA), and aspartate 495 each bind ATP.

The protein belongs to the chaperonin (HSP60) family. As to quaternary structure, forms a cylinder of 14 subunits composed of two heptameric rings stacked back-to-back. Interacts with the co-chaperonin GroES.

The protein localises to the cytoplasm. It catalyses the reaction ATP + H2O + a folded polypeptide = ADP + phosphate + an unfolded polypeptide.. Its function is as follows. Together with its co-chaperonin GroES, plays an essential role in assisting protein folding. The GroEL-GroES system forms a nano-cage that allows encapsulation of the non-native substrate proteins and provides a physical environment optimized to promote and accelerate protein folding. This chain is Chaperonin GroEL, found in Cupriavidus necator (strain ATCC 17699 / DSM 428 / KCTC 22496 / NCIMB 10442 / H16 / Stanier 337) (Ralstonia eutropha).